The chain runs to 292 residues: Zinc finger protein OZF (292 aa).

10 consecutive C2H2-type zinc fingers follow at residues 16 to 38 (FACK…EHFH), 44 to 66 (FECN…QNTH), 72 to 94 (FECN…QKIH), 100 to 122 (FECK…QRTH), 128 to 150 (FVCK…EKIH), 156 to 178 (FKCS…QNIH), 184 to 206 (YECN…VRIH), 212 to 234 (YECN…VRSH), 240 to 262 (YGCN…LRIH), and 268 to 290 (YQCS…QKIH). Residues Lys28, Lys51, and Lys56 each participate in a glycyl lysine isopeptide (Lys-Gly) (interchain with G-Cter in SUMO2) cross-link. Residues Lys157 and Lys169 each participate in a glycyl lysine isopeptide (Lys-Gly) (interchain with G-Cter in SUMO) cross-link. Residue Lys173 forms a Glycyl lysine isopeptide (Lys-Gly) (interchain with G-Cter in SUMO2) linkage. The interaction with TERF2IP stretch occupies residues 212–292 (YECNVCGKAF…HIRHQKIHTH (81 aa)).

Belongs to the krueppel C2H2-type zinc-finger protein family. As to quaternary structure, binds DNA. Interacts with SUMO conjugating enzyme UBC9/UBE2I. Interacts with the telomeric protein TERF2IP. Post-translationally, sumoylated. As to expression, liver, skeletal and heart muscle, mammary cells. Very low levels in brain, lung, placenta and kidney. Strongly overexpressed in many pancreas and colorectal cancers. Increased gene copy numbers are detected in 3 of 12 tumor cell lines and 2 of 12 primary pancreatic carcinomas. Overexpressed in 80% of colorectal cancers.

Its subcellular location is the nucleus. The sequence is that of Zinc finger protein OZF (ZNF146) from Homo sapiens (Human).